A 194-amino-acid polypeptide reads, in one-letter code: Large ribosomal subunit protein bL25 (194 aa).

It belongs to the bacterial ribosomal protein bL25 family. CTC subfamily. In terms of assembly, part of the 50S ribosomal subunit; part of the 5S rRNA/L5/L18/L25 subcomplex. Contacts the 5S rRNA. Binds to the 5S rRNA independently of L5 and L18.

Its function is as follows. This is one of the proteins that binds to the 5S RNA in the ribosome where it forms part of the central protuberance. The sequence is that of Large ribosomal subunit protein bL25 from Geobacter sulfurreducens (strain ATCC 51573 / DSM 12127 / PCA).